The following is a 427-amino-acid chain: 3-phosphoshikimate 1-carboxyvinyltransferase (427 aa).

Positions 22, 23, and 27 each coordinate 3-phosphoshikimate. Lys22 contacts phosphoenolpyruvate. Residues Gly96 and Arg124 each contribute to the phosphoenolpyruvate site. 3-phosphoshikimate-binding residues include Ser169, Ser170, Gln171, Ser197, Asp313, Asn336, and Lys340. Residue Gln171 participates in phosphoenolpyruvate binding. Catalysis depends on Asp313, which acts as the Proton acceptor. The phosphoenolpyruvate site is built by Arg344, Arg386, and Lys411.

This sequence belongs to the EPSP synthase family. In terms of assembly, monomer.

Its subcellular location is the cytoplasm. The catalysed reaction is 3-phosphoshikimate + phosphoenolpyruvate = 5-O-(1-carboxyvinyl)-3-phosphoshikimate + phosphate. It functions in the pathway metabolic intermediate biosynthesis; chorismate biosynthesis; chorismate from D-erythrose 4-phosphate and phosphoenolpyruvate: step 6/7. Catalyzes the transfer of the enolpyruvyl moiety of phosphoenolpyruvate (PEP) to the 5-hydroxyl of shikimate-3-phosphate (S3P) to produce enolpyruvyl shikimate-3-phosphate and inorganic phosphate. This Escherichia coli O9:H4 (strain HS) protein is 3-phosphoshikimate 1-carboxyvinyltransferase.